The following is a 261-amino-acid chain: Glucanase inhibitor protein 3 (261 aa).

The signal sequence occupies residues M1 to A21. In terms of domain architecture, Peptidase S1 spans I29–K260. The cysteines at positions 56 and 72 are disulfide-linked. N-linked (GlcNAc...) asparagine glycosylation occurs at N108. 2 disulfides stabilise this stretch: C183/C195 and C205/C236.

It belongs to the peptidase S1 family.

The protein resides in the secreted. Secreted effector that suppresses host plant glucan elicitor-mediated defense responses. Targets host endoglucanases and inhibits the endoglucanase-mediated release of elicitor-active glucan oligosaccharides from P.sojae cell walls. The chain is Glucanase inhibitor protein 3 (GIP3) from Phytophthora sojae (strain P6497) (Soybean stem and root rot agent).